Here is a 179-residue protein sequence, read N- to C-terminus: Replication restart protein DnaT (179 aa).

The tract at residues 151–179 (SRASNGGQPKRDVNSVSEPDSHIPRGFRG) is disordered. Residues 159–173 (PKRDVNSVSEPDSHI) are compositionally biased toward basic and acidic residues.

It belongs to the DnaT family. As to quaternary structure, homooligomerizes. Interacts with PriB. Component of the replication restart primosome. Primosome assembly occurs via a 'hand-off' mechanism. PriA binds to replication forks, subsequently PriB then DnaT bind; DnaT then displaces ssDNA to generate the helicase loading substrate.

Involved in the restart of stalled replication forks, which reloads the replicative helicase on sites other than the origin of replication. Can function in multiple replication restart pathways. Displaces ssDNA from a PriB-ssDNA complex. Probably forms a spiral filament on ssDNA. In Klebsiella pneumoniae (strain 342), this protein is Replication restart protein DnaT.